The primary structure comprises 316 residues: MSGRSPKAPRAPSSTRAGGLVVAAHGRHYLVAPDDGGAMLQCFPRGKRSEVAVGDHVIYELASADQGVIVEIGERRNLLYRSDQYKSKLFAANLDQLLIVLATEPHFSEDLLGRALVAAEANGLKPLIVLNKTDVTDELEGARKRLEPYRALGYTVVEVSIRTQPEAARAALIERLHGHSTLLLGQSGMGKSTLVNLLIPDAEVATREISTALNSGRHTTTFTRLYPLPDSADGTGGSLIDSPGFQEFGLHHLTEGRLERAFPEFRPLLPNCRFYNCHHLHEPGCAILEAVADGRIRRERHALYAQLVHEASQIVR.

Positions 83–248 constitute a CP-type G domain; the sequence is DQYKSKLFAA…LIDSPGFQEF (166 aa). GTP-binding positions include 131 to 134 and 185 to 193; these read NKTD and GQSGMGKST. The Zn(2+) site is built by C272, C277, H279, and C285.

The protein belongs to the TRAFAC class YlqF/YawG GTPase family. RsgA subfamily. Monomer. Associates with 30S ribosomal subunit, binds 16S rRNA. Zn(2+) serves as cofactor.

It localises to the cytoplasm. Its function is as follows. One of several proteins that assist in the late maturation steps of the functional core of the 30S ribosomal subunit. Helps release RbfA from mature subunits. May play a role in the assembly of ribosomal proteins into the subunit. Circularly permuted GTPase that catalyzes slow GTP hydrolysis, GTPase activity is stimulated by the 30S ribosomal subunit. This is Small ribosomal subunit biogenesis GTPase RsgA from Paraburkholderia xenovorans (strain LB400).